Reading from the N-terminus, the 101-residue chain is Phosphoribosyl-AMP cyclohydrolase (101 aa).

Position 71 (Asp-71) interacts with Mg(2+). Position 72 (Cys-72) interacts with Zn(2+). Mg(2+)-binding residues include Asp-73 and Asp-75. 2 residues coordinate Zn(2+): Cys-88 and Cys-95.

Belongs to the PRA-CH family. In terms of assembly, homodimer. Requires Mg(2+) as cofactor. The cofactor is Zn(2+).

Its subcellular location is the cytoplasm. It catalyses the reaction 1-(5-phospho-beta-D-ribosyl)-5'-AMP + H2O = 1-(5-phospho-beta-D-ribosyl)-5-[(5-phospho-beta-D-ribosylamino)methylideneamino]imidazole-4-carboxamide. Its pathway is amino-acid biosynthesis; L-histidine biosynthesis; L-histidine from 5-phospho-alpha-D-ribose 1-diphosphate: step 3/9. Functionally, catalyzes the hydrolysis of the adenine ring of phosphoribosyl-AMP. This Bacillus cytotoxicus (strain DSM 22905 / CIP 110041 / 391-98 / NVH 391-98) protein is Phosphoribosyl-AMP cyclohydrolase.